The primary structure comprises 364 residues: MARTMRSRVVAGAVACAMSIAPFAGTTAVMTLATTHAAMAATAPADGYAATRYPIILVHGLSGTDKYAGVVEYWYGIQEDLQQNGATVYVANLSGFQSDDGANGRGEQLLAYVKTVLAATGATKVNLVGHSQGGLTSRYVAAVAPDLVASVTTIGTPHRGSEFADFVQNVLAYDPTGLSSSVIAAFVNVFGILTSSSHNTNQDALAALQTLTTARAATYNQNYPSAGLGAPGSCQTGAPTETVGGNTHLLYSWAGTAIQPTLSVFGITGATDTSTVPLVDLANVLDPSTLALFGTGTVMINRGSGQNDGLVSKCSALYGKVLSTSYKWNHLDEINQLLGVRGAYAEDPVAVIRTHANRLKLAGV.

A signal peptide spans Met-1–Pro-44. In terms of domain architecture, AB hydrolase-1 spans Pro-54–Glu-333. Leu-61 contacts substrate. Residue Ser-131 is the Nucleophile of the active site. Gln-132 provides a ligand contact to substrate. Cys-234 and Cys-314 form a disulfide bridge. Position 286 (Asp-286) interacts with Ca(2+). Residues Asp-308 and His-330 each act as charge relay system in the active site. Residues Asp-332, Gln-336, and Val-340 each contribute to the Ca(2+) site.

This sequence belongs to the AB hydrolase superfamily. Pseudomonas lipase family. Monomer. Ca(2+) serves as cofactor.

It is found in the secreted. It carries out the reaction a triacylglycerol + H2O = a diacylglycerol + a fatty acid + H(+). In terms of biological role, catalyzes the hydrolysis of triacylglycerol. This Pseudomonas sp. (strain KWI-56) protein is Triacylglycerol lipase.